The primary structure comprises 212 residues: Adenylate kinase (212 aa).

ATP is bound at residue 10–15 (GAGKGT). An NMP region spans residues 30–59 (STGDMFRAAMANQTEMGVLAKSYIDKGELV). AMP is bound by residues Thr31, Arg36, 57 to 59 (ELV), 86 to 89 (GYPR), and Gln93. The tract at residues 127-159 (GRIIHRQTGETFHKVFNPPANYNEEDYYQREDD) is LID. ATP is bound by residues Arg128 and 137 to 138 (TF). AMP-binding residues include Arg156 and Arg167. Gln195 contributes to the ATP binding site.

The protein belongs to the adenylate kinase family. As to quaternary structure, monomer.

It is found in the cytoplasm. The enzyme catalyses AMP + ATP = 2 ADP. Its pathway is purine metabolism; AMP biosynthesis via salvage pathway; AMP from ADP: step 1/1. In terms of biological role, catalyzes the reversible transfer of the terminal phosphate group between ATP and AMP. Plays an important role in cellular energy homeostasis and in adenine nucleotide metabolism. The polypeptide is Adenylate kinase (Streptococcus gordonii (strain Challis / ATCC 35105 / BCRC 15272 / CH1 / DL1 / V288)).